Consider the following 1240-residue polypeptide: Pectate lyase L (1240 aa).

The signal sequence occupies residues 1-26 (MRNCKGLSILLCFLLVFFAMPFPAVA). Has catalytic activity regions lie at residues 27 to 551 (EEAE…VTVR) and 545 to 1240 (TLKV…KSIK). Residues Asp-325, Glu-349, Asp-350, Asp-1049, Asp-1073, Asp-1074, and Asp-1077 each contribute to the Ca(2+) site. The Proton acceptor role is filled by Lys-1117.

This sequence belongs to the polysaccharide lyase 9 family. Requires Ca(2+) as cofactor.

The protein resides in the secreted. The enzyme catalyses Eliminative cleavage of (1-&gt;4)-alpha-D-galacturonan to give oligosaccharides with 4-deoxy-alpha-D-galact-4-enuronosyl groups at their non-reducing ends.. Inhibited by the metal chelator ethylenediaminetetraacetic acid (EDTA). Functionally, cleaves polygalacturonate or partially methylated pectin. When assayed on polygalacturonate or on pectin, it releases monogalacturonate as the principal product. This chain is Pectate lyase L, found in Thermoclostridium stercorarium (Clostridium stercorarium).